Consider the following 458-residue polypeptide: Exodeoxyribonuclease 7 large subunit (458 aa).

The protein belongs to the XseA family. In terms of assembly, heterooligomer composed of large and small subunits.

It is found in the cytoplasm. The catalysed reaction is Exonucleolytic cleavage in either 5'- to 3'- or 3'- to 5'-direction to yield nucleoside 5'-phosphates.. Functionally, bidirectionally degrades single-stranded DNA into large acid-insoluble oligonucleotides, which are then degraded further into small acid-soluble oligonucleotides. In Sodalis glossinidius (strain morsitans), this protein is Exodeoxyribonuclease 7 large subunit.